A 407-amino-acid chain; its full sequence is Keratin, type I cuticular Ha2 (407 aa).

The tract at residues 1 to 55 (MPSVCMPTTYRPASCLSKTYLSSSCQPSNRRPTGCISSSMGTYGLFCEGAFNGNE) is head. The region spanning 55–366 (EKETMQVLND…GLLESEDSKL (312 aa)) is the IF rod domain. The interval 56 to 90 (KETMQVLNDRLANYLEKVRQLEKENAELEGKIQDV) is coil 1A. The interval 91–101 (YQGQVLTMCPD) is linker 1. The interval 102-202 (YQSYFQTIEE…HEEEVGVLRQ (101 aa)) is coil 1B. Residues 203-218 (QLGDRLNIEVDAAPPV) are linker 12. Positions 219-362 (DLTRMLEEMR…DTYRGLLESE (144 aa)) are coil 2. A tail region spans residues 363 to 407 (DSKLPCNPCSTPSCQPCAPSPGVSRTVCVPHTVCVPCSPCLQTRY).

It belongs to the intermediate filament family. Cuticle of the hair shaft.

This is Keratin, type I cuticular Ha2 (Krt32) from Mus musculus (Mouse).